The sequence spans 159 residues: Putative pre-16S rRNA nuclease (159 aa).

It belongs to the YqgF nuclease family.

It localises to the cytoplasm. Its function is as follows. Could be a nuclease involved in processing of the 5'-end of pre-16S rRNA. The sequence is that of Putative pre-16S rRNA nuclease from Bartonella henselae (strain ATCC 49882 / DSM 28221 / CCUG 30454 / Houston 1) (Rochalimaea henselae).